The following is a 104-amino-acid chain: Small ribosomal subunit protein bS18c (104 aa).

Positions 84–104 (DKQFERSESTPRTIGLRTRNK) are disordered.

The protein belongs to the bacterial ribosomal protein bS18 family. Part of the 30S ribosomal subunit.

Its subcellular location is the plastid. The protein resides in the chloroplast. The chain is Small ribosomal subunit protein bS18c from Cucumis sativus (Cucumber).